Reading from the N-terminus, the 518-residue chain is MEGRGFSGLYRNSSEELFLKTVMESPIGMPVPSMEMLGFKNVSQGFRADSEELFKRWLTNGEGYNSSSIGFSSRLSKRISTELVNGSNQLQVGVASDGRNNDKPFIQNNLLANDVSGDFNFPIRDPVDRELQPSNLFLAKAWFLSDQRMTRSRSSELRRRYSEMQNGLATQGIESICMDPQHGAEATKQEVANFNGYNYLSMCELPSQKGSFMSPSNSCSSNFNTPQFGDMDKVSSCVSMLKGTLQRRRLSSQLEKEAAEDDLNGIFYPQEPLFQTGFDQGQENWSNQTPVNVQVDSIGEVKDHGVLQTLEGSTNPVVDGFANQINQIYVGTASGEPSQSESSNAAPVISSGLDTCEGPINSNQTLCESSWKQVGVSKSSENTQNRVKGFREQIMDNLKDDKKRKSLERYGSITSAVSDDKGDTTKKRRVERSRKMAEAKERNSTPSVPSDMQAVLKRCENLEKEVRSLKLNLSFMNRKDSEQTKQIEDLQKQNEELADEKERLLEEIERILSETEKM.

Positions 401-451 are disordered; that stretch reads DKKRKSLERYGSITSAVSDDKGDTTKKRRVERSRKMAEAKERNSTPSVPSD. 2 short sequence motifs (nuclear localization signal) span residues 402–405 and 426–429; these read KKRK and KKRR. Over residues 433–443 the composition is skewed to basic and acidic residues; it reads SRKMAEAKERN. A coiled-coil region spans residues 452 to 518; that stretch reads MQAVLKRCEN…ERILSETEKM (67 aa).

This sequence belongs to the CYCLOPS family. Forms homodimers. Interacts with CCAMK. Post-translationally, phosphorylated at the N-terminus by CCAMK. In terms of tissue distribution, expressed in roots.

The protein resides in the nucleus. Involved in symbiotic signaling. Required for root infection by symbiotic rhizobia, infection thread (IT) formation, and nodule development. Probably not involved in nodule organogenesis. Involved in arbuscular mycorrhizal (AM) symbiosis. Required for fungal infection of the outer cortical cell layers, and for arbuscule development during the AM symbiosis, by binding, as a complex comprising CCaMK, CYCLOPS, and DELLA, to RAM1 promoter cis element thus promoting its expression. Acts downstream of CCAMK. Binds to the promoter of ERN1 and strongly transactivates ERN1, a transcriptional regulator required for nodulation. In Lotus japonicus (Lotus corniculatus var. japonicus), this protein is Protein CYCLOPS.